Reading from the N-terminus, the 195-residue chain is NADH-quinone oxidoreductase subunit B (195 aa).

Residues C74, C75, C139, and C169 each coordinate [4Fe-4S] cluster.

The protein belongs to the complex I 20 kDa subunit family. NDH-1 is composed of 14 different subunits. Subunits NuoB, C, D, E, F, and G constitute the peripheral sector of the complex. Requires [4Fe-4S] cluster as cofactor.

Its subcellular location is the cell inner membrane. It catalyses the reaction a quinone + NADH + 5 H(+)(in) = a quinol + NAD(+) + 4 H(+)(out). NDH-1 shuttles electrons from NADH, via FMN and iron-sulfur (Fe-S) centers, to quinones in the respiratory chain. The immediate electron acceptor for the enzyme in this species is believed to be ubiquinone. Couples the redox reaction to proton translocation (for every two electrons transferred, four hydrogen ions are translocated across the cytoplasmic membrane), and thus conserves the redox energy in a proton gradient. In Methylorubrum populi (strain ATCC BAA-705 / NCIMB 13946 / BJ001) (Methylobacterium populi), this protein is NADH-quinone oxidoreductase subunit B.